Here is a 571-residue protein sequence, read N- to C-terminus: MSSMTTTDNKAFLNELARLVGSSHLLTDPAKTARYRKGFRSGQGDALAVVFPGSLLELWRVLKACVTADKIILMQAANTGLTEGSTPNGNDYDRDVVIISTLRLDKLHVLGKGEQVLAYPGTTLYSLEKALKPLGREPHSVIGSSCIGASVIGGICNNSGGSLVQRGPAYTEMSLFARINEDGKLTLVNHLGIDLGETPEQILSKLDDDRIKDDDVRHDGRHAHDYDYVHRVRDIEADTPARYNADPDRLFESSGCAGKLAVFAVRLDTFEAEKNQQVFYIGTNQPEVLTEIRRHILANFENLPVAGEYMHRDIYDIAEKYGKDTFLMIDKLGTDKMPFFFNLKGRTDAMLEKVKFFRPHFTDRAMQKFGHLFPSHLPPRMKNWRDKYEHHLLLKMAGDGVGEAKSWLVDYFKQAEGDFFVCTPEEGSKAFLHRFAAAGAAIRYQAVHSDEVEDILALDIALRRNDTEWYEHLPPEIDSQLVHKLYYGHFMCYVFHQDYIVKKGVDVHALKEQMLELLQQRGAQYPAEHNVGHLYKAPETLQKFYRENDPTNSMNPGIGKTSKRKNWQEVE.

The region spanning 42-213 (GQGDALAVVF…SKLDDDRIKD (172 aa)) is the FAD-binding PCMH-type domain. Residues 76–80 (AANTG), 84–85 (GS), Gly-143, Ser-150, Gly-160, and Val-262 contribute to the FAD site. The interval 546–571 (RENDPTNSMNPGIGKTSKRKNWQEVE) is disordered.

Belongs to the quinone-dependent D-lactate dehydrogenase family. FAD is required as a cofactor.

The protein localises to the cell inner membrane. It catalyses the reaction (R)-lactate + a quinone = a quinol + pyruvate. With respect to regulation, inhibited by 2-hydroxy-3-butynoic acid, but not by p-chloromercuribenzoate, n-ethylmaleimide, or 5,5'-dithiobis(2-nitrobenzoic acid). Functionally, catalyzes the oxidation of D-lactate to pyruvate. Electrons derived from D-lactate oxidation are transferred to the ubiquinone/cytochrome electron transfer chain, where they may be used to provide energy for the active transport of a variety of amino acids and sugars across the membrane. In Escherichia coli (strain K12), this protein is Quinone-dependent D-lactate dehydrogenase.